The primary structure comprises 931 residues: Transportin (931 aa).

HEAT repeat units follow at residues 10-37, 42-79, 88-121, 127-164, 171-201, 214-241, 253-280, 296-421, 430-459, 471-498, 512-545, 553-586, 594-632, 640-693, 704-735, 743-776, 784-819, 827-860, and 869-900; these read GLKQ…EELD, VPDY…QYFE, YIKR…KSCF, LLPA…LDSD, NQLI…YFII, FLKG…VTLV, KDVI…FWTA, PVLV…LSGI, VTLP…GAIA, SKVI…TLSR, LHPL…EEEA, LQMI…AKVV, ELIN…SSIG, SLFF…GIGT, LPHL…KFCL, PDYL…IRMP, VAIR…IVSP, DKFI…INNN, and VYIC…KTSM. Positions 32 to 99 constitute an Importin N-terminal domain; the sequence is IREELDKFHS…KREILPVLSD (68 aa). The disordered stretch occupies residues 317-401; sequence DQGDDSMTPD…DDDDDDDGFE (85 aa). The segment covering 358–381 has biased composition (low complexity); it reads DNNNNSNNNNSSNNNSSNNNNNNN. Positions 382–401 are enriched in acidic residues; that stretch reads NEDDEEYNDDDDDDDDDGFE.

The protein belongs to the importin beta family. Importin beta-2 subfamily. As to quaternary structure, forms a complex with an importin alpha subunit.

The protein resides in the cytoplasm. It localises to the nucleus envelope. In terms of biological role, functions in nuclear protein import via a substrate-importin alpha-beta transport complex that passes though the nuclear pore complexes (NPC). Mediates docking of the substrate-importin complex to distinct nucleoporins. The sequence is that of Transportin (tnpo) from Dictyostelium discoideum (Social amoeba).